We begin with the raw amino-acid sequence, 212 residues long: uncharacterized protein (212 aa).

Cys52 (acyl-thioester intermediate) is an active-site residue. Active-site residues include His89 and Asp104.

Belongs to the arylamine N-acetyltransferase family.

This is an uncharacterized protein from Acanthamoeba polyphaga (Amoeba).